A 405-amino-acid polypeptide reads, in one-letter code: Protein NDRG4 (405 aa).

The segment at 352-405 is disordered; it reads AGAVPSASMTRLARSRTASLTSASSVDGARPRPCTQSESSDGIGQINHTMEVSC. A compositionally biased stretch (low complexity) spans 361–376; sequence TRLARSRTASLTSASS. Over residues 385-405 the composition is skewed to polar residues; it reads CTQSESSDGIGQINHTMEVSC.

The protein belongs to the NDRG family.

It is found in the cytoplasm. The protein resides in the cytosol. Functionally, contributes to the maintenance of intracerebral BDNF levels within the normal range. May enhance growth factor-induced ERK1 and ERK2 phosphorylation. May attenuate growth factor-promoted ELK1 phosphorylation in a microtubule-dependent manner. This is Protein NDRG4 from Xenopus tropicalis (Western clawed frog).